The chain runs to 481 residues: F-box/FBD/LRR-repeat protein At5g18770 (481 aa).

The F-box domain occupies 23–69; that stretch reads EDMISALPDHLLCHILIFLSTDESVLTSVLSSRWRNLWKWVPRLDLN. 7 LRR repeats span residues 126-153, 159-185, 186-211, 214-234, 236-261, 289-314, and 340-368; these read KPNV…TLSA, CLKL…YLED, VVFP…KLSL, DDVV…TLKR, VPVY…SLID, DELS…TISW, and ATMS…HFTL. An FBD domain is found at 378 to 430; sequence VITGFSRVLPRCLVFSLESVEMESPITEKATELKLVRYFLENSATLKKLVLLL.

The chain is F-box/FBD/LRR-repeat protein At5g18770 from Arabidopsis thaliana (Mouse-ear cress).